A 258-amino-acid chain; its full sequence is Imidazole glycerol phosphate synthase subunit HisF (258 aa).

Residues Asp-11 and Asp-130 contribute to the active site.

It belongs to the HisA/HisF family. Heterodimer of HisH and HisF.

The protein resides in the cytoplasm. It carries out the reaction 5-[(5-phospho-1-deoxy-D-ribulos-1-ylimino)methylamino]-1-(5-phospho-beta-D-ribosyl)imidazole-4-carboxamide + L-glutamine = D-erythro-1-(imidazol-4-yl)glycerol 3-phosphate + 5-amino-1-(5-phospho-beta-D-ribosyl)imidazole-4-carboxamide + L-glutamate + H(+). Its pathway is amino-acid biosynthesis; L-histidine biosynthesis; L-histidine from 5-phospho-alpha-D-ribose 1-diphosphate: step 5/9. In terms of biological role, IGPS catalyzes the conversion of PRFAR and glutamine to IGP, AICAR and glutamate. The HisF subunit catalyzes the cyclization activity that produces IGP and AICAR from PRFAR using the ammonia provided by the HisH subunit. The sequence is that of Imidazole glycerol phosphate synthase subunit HisF from Yersinia pseudotuberculosis serotype IB (strain PB1/+).